We begin with the raw amino-acid sequence, 283 residues long: 4-diphosphocytidyl-2-C-methyl-D-erythritol kinase (283 aa).

The active site involves Lys12. An ATP-binding site is contributed by 99 to 109 (PLAAGIGGGSA). Asp141 is an active-site residue.

It belongs to the GHMP kinase family. IspE subfamily.

It catalyses the reaction 4-CDP-2-C-methyl-D-erythritol + ATP = 4-CDP-2-C-methyl-D-erythritol 2-phosphate + ADP + H(+). Its pathway is isoprenoid biosynthesis; isopentenyl diphosphate biosynthesis via DXP pathway; isopentenyl diphosphate from 1-deoxy-D-xylulose 5-phosphate: step 3/6. Its function is as follows. Catalyzes the phosphorylation of the position 2 hydroxy group of 4-diphosphocytidyl-2C-methyl-D-erythritol. This is 4-diphosphocytidyl-2-C-methyl-D-erythritol kinase from Sphingopyxis alaskensis (strain DSM 13593 / LMG 18877 / RB2256) (Sphingomonas alaskensis).